Consider the following 165-residue polypeptide: Phosphopantetheine adenylyltransferase (165 aa).

Ser-10 serves as a coordination point for substrate. ATP-binding positions include 10–11 (SF) and His-18. The substrate site is built by Lys-42, Leu-74, and Arg-88. ATP-binding positions include 89 to 91 (GLR), Glu-99, and 124 to 130 (YSFISSS).

Belongs to the bacterial CoaD family. Homohexamer. Requires Mg(2+) as cofactor.

The protein localises to the cytoplasm. The enzyme catalyses (R)-4'-phosphopantetheine + ATP + H(+) = 3'-dephospho-CoA + diphosphate. The protein operates within cofactor biosynthesis; coenzyme A biosynthesis; CoA from (R)-pantothenate: step 4/5. Its function is as follows. Reversibly transfers an adenylyl group from ATP to 4'-phosphopantetheine, yielding dephospho-CoA (dPCoA) and pyrophosphate. The protein is Phosphopantetheine adenylyltransferase of Macrococcus caseolyticus (strain JCSC5402) (Macrococcoides caseolyticum).